We begin with the raw amino-acid sequence, 311 residues long: Solute carrier family 25 member 48 (311 aa).

Solcar repeat units lie at residues Asn-3 to Phe-86, Pro-100 to Trp-205, and Pro-214 to Ala-301. Transmembrane regions (helical) follow at residues Phe-9–Val-29, Gly-61–Ser-81, Leu-107–Ile-127, Cys-193–Gly-213, Cys-217–Met-237, and Ile-277–Tyr-295.

The protein belongs to the mitochondrial carrier (TC 2.A.29) family.

Its subcellular location is the mitochondrion inner membrane. This is Solute carrier family 25 member 48 (SLC25A48) from Bos taurus (Bovine).